A 1132-amino-acid chain; its full sequence is DNA-directed RNA polymerase subunit beta (1132 aa).

The protein belongs to the RNA polymerase beta chain family. As to quaternary structure, the RNAP catalytic core consists of 2 alpha, 1 beta, 1 beta' and 1 omega subunit. When a sigma factor is associated with the core the holoenzyme is formed, which can initiate transcription.

It carries out the reaction RNA(n) + a ribonucleoside 5'-triphosphate = RNA(n+1) + diphosphate. DNA-dependent RNA polymerase catalyzes the transcription of DNA into RNA using the four ribonucleoside triphosphates as substrates. In Carboxydothermus hydrogenoformans (strain ATCC BAA-161 / DSM 6008 / Z-2901), this protein is DNA-directed RNA polymerase subunit beta.